Consider the following 547-residue polypeptide: Nuclear speckle splicing regulatory protein 1 (547 aa).

Residues 25 to 51 (KPSVFGNDSDDDEASVSESLQREAAKK) are disordered. Phosphoserine is present on residues Ser-27 and Ser-33. A coiled-coil region spans residues 103-177 (IHNLLKAVEI…EARLDVTKQK (75 aa)). The interval 105–169 (NLLKAVEIRK…REKRAAALEA (65 aa)) is necessary for alternative splicing activity. Residues 188-523 (NQAVGEEAVP…KRSNEETVMS (336 aa)) form a disordered region. Glycyl lysine isopeptide (Lys-Gly) (interchain with G-Cter in SUMO2) cross-links involve residues Lys-198 and Lys-209. A compositionally biased stretch (basic and acidic residues) spans 200–217 (SFREARTVIKEEKLRGYP). Polar residues predominate over residues 223–232 (ENRPQQNCAL). Residues 237-254 (EEAEENPDADSDSEESCD) show a composition bias toward acidic residues. Residues Ser-247 and Ser-252 each carry the phosphoserine modification. Basic and acidic residues predominate over residues 255–269 (DGERGDHKVKSRGEE). Lys-276 is modified (N6-acetyllysine). A compositionally biased stretch (basic residues) spans 277 to 287 (YLKHHKNHTHS). Residue Lys-279 forms a Glycyl lysine isopeptide (Lys-Gly) (interchain with G-Cter in SUMO2) linkage. Basic and acidic residues predominate over residues 308 to 339 (RGHEHKGGQHQDRQSRDQESCHKDRSHREEKS). The span at 340-355 (SHRHREASHKDHHWKR) shows a compositional bias: basic residues. Basic and acidic residues-rich tracts occupy residues 356–480 (HEHE…KPPR) and 490–506 (RLTE…ERPP). Residues 376–417 (KREKYSSREQEKDRQWNDHDRYSEKEKKGKEKEEHRKARRER) adopt a coiled-coil conformation. Phosphoserine is present on Ser-447.

This sequence belongs to the NSRP1 family. As to quaternary structure, interacts (via C-terminus) with SRSF1. Interacts (via C-terminus) with SRSF2.

It is found in the nucleus. The protein localises to the nucleus speckle. In terms of biological role, RNA-binding protein that mediates pre-mRNA alternative splicing regulation. The sequence is that of Nuclear speckle splicing regulatory protein 1 (Nsrp1) from Rattus norvegicus (Rat).